The sequence spans 450 residues: Coiled-coil domain-containing protein 149-A (450 aa).

2 coiled-coil regions span residues 1-197 (MANQ…DRRK) and 259-286 (IQHQ…LEIS). The interval 290–358 (SLPDDRTGRG…NGQVGTQLKE (69 aa)) is disordered. The span at 343-354 (PSGTRTNGQVGT) shows a compositional bias: polar residues.

It belongs to the CCDC149 family.

This is Coiled-coil domain-containing protein 149-A (ccdc149a) from Danio rerio (Zebrafish).